Consider the following 253-residue polypeptide: DNA repair protein RecO (253 aa).

It belongs to the RecO family.

Functionally, involved in DNA repair and RecF pathway recombination. The sequence is that of DNA repair protein RecO from Staphylococcus epidermidis (strain ATCC 35984 / DSM 28319 / BCRC 17069 / CCUG 31568 / BM 3577 / RP62A).